Reading from the N-terminus, the 382-residue chain is Succinyl-diaminopimelate desuccinylase (382 aa).

Zn(2+) is bound at residue H73. Residue D75 is part of the active site. Residue D106 coordinates Zn(2+). Catalysis depends on E140, which acts as the Proton acceptor. Zn(2+)-binding residues include E141, E169, and H355.

Belongs to the peptidase M20A family. DapE subfamily. In terms of assembly, homodimer. The cofactor is Zn(2+). It depends on Co(2+) as a cofactor.

It catalyses the reaction N-succinyl-(2S,6S)-2,6-diaminopimelate + H2O = (2S,6S)-2,6-diaminopimelate + succinate. It participates in amino-acid biosynthesis; L-lysine biosynthesis via DAP pathway; LL-2,6-diaminopimelate from (S)-tetrahydrodipicolinate (succinylase route): step 3/3. Functionally, catalyzes the hydrolysis of N-succinyl-L,L-diaminopimelic acid (SDAP), forming succinate and LL-2,6-diaminopimelate (DAP), an intermediate involved in the bacterial biosynthesis of lysine and meso-diaminopimelic acid, an essential component of bacterial cell walls. This Leptothrix cholodnii (strain ATCC 51168 / LMG 8142 / SP-6) (Leptothrix discophora (strain SP-6)) protein is Succinyl-diaminopimelate desuccinylase.